Consider the following 193-residue polypeptide: Pre-histone-like nucleoprotein (193 aa).

Ser-2 carries the N-acetylserine; by host modification. Positions 2–24 are excised as a propeptide; that stretch reads SIFISPSNNTGWGLRAPSKMYGG. N6-acetyllysine; by host is present on Lys-48. Phosphothreonine; by host is present on Thr-55. Residues 183 to 193 carry the Nuclear localization signal motif; it reads RVPVRTRPPRT.

This sequence belongs to the adenoviridae histone-like nucleoprotein family. In terms of assembly, interacts with the core-capsid bridging protein; this interaction bridges the virus core to the capsid. Interacts with host NPM1; this interaction might play a role in placing the pre-histone-like nucleoprotein on the viral DNA or regulating viral gene expression. Interacts with host HMGB1; this interaction inhibits host immune response. Post-translationally, cleaved near the N-terminus by the viral protease during virion maturation to form the mature protein.

The protein resides in the virion. It is found in the host nucleus. Its subcellular location is the host nucleolus. Functionally, plays a role in the inhibition of host immune response within the nucleus. Interacts with cellular nucleosomes and immobilizes the host immune danger signal HMGB1 on chromatin. In turn, prevents HMGB1 release out of the cell and thus decreases inflammation. Also plays a role in the wrapping and condensation of the viral DNA. May also promote viral genome import into the nucleus. In Homo sapiens (Human), this protein is Pre-histone-like nucleoprotein.